Consider the following 1310-residue polypeptide: Angiotensin-converting enzyme (1310 aa).

A signal peptide spans 1–33 (MGAAPGRRGPRLLRPPPPLLLLLLLLRPPPAAL). At 34–1260 (TLDPGLLPGD…GMNLDAQQAR (1227 aa)) the chain is on the extracellular side. Peptidase M2 domains are found at residues 45 to 628 (AADE…LGWP) and 647 to 1226 (VTDE…LGWP). Residues Asn-59, Asn-79, and Asn-151 are each glycosylated (N-linked (GlcNAc...) asparagine). Cys-162 and Cys-170 are joined by a disulfide. Tyr-236 contributes to the chloride binding site. The N-linked (GlcNAc...) asparagine glycan is linked to Asn-323. A disulfide bridge links Cys-364 with Cys-382. His-395 lines the Zn(2+) pocket. Catalysis depends on Glu-396, which acts as the Proton acceptor 1. Residues His-399 and Glu-422 each contribute to the Zn(2+) site. Asn-449 and Asn-513 each carry an N-linked (GlcNAc...) asparagine glycan. The active-site Proton donor 1 is the His-524. Residue Arg-533 participates in chloride binding. Cys-549 and Cys-561 form a disulfide bridge. Residues Asn-681, Asn-699, and Asn-718 are each glycosylated (N-linked (GlcNAc...) asparagine). A disulfide bridge connects residues Cys-761 and Cys-767. Arg-795 and Tyr-833 together coordinate chloride. The N-linked (GlcNAc...) asparagine glycan is linked to Asn-946. Cys-961 and Cys-979 are disulfide-bonded. A Zn(2+)-binding site is contributed by His-992. The Proton acceptor 2 role is filled by Glu-993. The Zn(2+) site is built by His-996 and Glu-1020. The chloride site is built by Trp-1094 and Arg-1098. His-1122 serves as the catalytic Proton donor 2. Arg-1131 provides a ligand contact to chloride. Cys-1147 and Cys-1159 are disulfide-bonded. Asn-1195 is a glycosylation site (N-linked (GlcNAc...) asparagine). The tract at residues 1219–1260 (HGEKLGWPQYTWTPNSARSEGSLPDSGRVNFLGMNLDAQQAR) is juxtamembrane stalk. The helical transmembrane segment at 1261-1281 (VGQWVLLFLGVALLLASLGLT) threads the bilayer. Over 1282 to 1310 (QRLFSIRYQSLRQPHHGPQFGSEVELRHS) the chain is Cytoplasmic. Phosphoserine is present on Ser-1303.

This sequence belongs to the peptidase M2 family. As to quaternary structure, monomer and homodimer; homodimerizes following binding to an inhibitor. Interacts with calmodulin (CALM1, CALM2 or CALM3); interaction takes place in the cytoplasmic region and regulates phosphorylation and proteolytic cleavage. The cofactor is Zn(2+). Requires chloride as cofactor. Post-translationally, N-glycosylated. Phosphorylated by CK2 on Ser-1303; which allows membrane retention. Phosphorylated on tyrosine residues on its extracellular part, promoting cleavage by secretase enzymes and formation of the soluble form (Angiotensin-converting enzyme, soluble form). In terms of processing, produced following proteolytic cleavage by secretase enzymes that cleave the transmembrane form in the juxtamembrane stalk region upstream of the transmembrane region. Cleavage can take place at different sites of the juxtamembrane stalk region. In terms of tissue distribution, testis-specific isoform is expressed in spermatocytes, adult testis.

Its subcellular location is the cell membrane. It is found in the cytoplasm. The protein resides in the secreted. The enzyme catalyses Release of a C-terminal dipeptide, oligopeptide-|-Xaa-Yaa, when Xaa is not Pro, and Yaa is neither Asp nor Glu. Thus, conversion of angiotensin I to angiotensin II, with increase in vasoconstrictor activity, but no action on angiotensin II.. It catalyses the reaction angiotensin I + H2O = L-histidyl-L-leucine + angiotensin II. The catalysed reaction is bradykinin + H2O = L-Phe-L-Arg + bradykinin(1-7). It carries out the reaction substance P + H2O = substance P(1-9) + L-Leu-L-Met-NH2. The enzyme catalyses substance P + H2O = substance P(1-8) + Gly-L-Leu-L-Met-NH2. It catalyses the reaction substance P + H2O = L-Phe-L-Phe-Gly-L-Leu-L-Met-NH2 + substance P(1-6). The catalysed reaction is neurotensin + H2O = neurotensin(1-11) + L-isoleucyl-L-leucine. It carries out the reaction goralatide + H2O = N-acetyl-L-seryl-L-aspartate + L-lysyl-L-proline. The enzyme catalyses Met-enkephalin + H2O = L-phenylalanyl-L-methionine + L-tyrosylglycylglycine. It catalyses the reaction Leu-enkephalin + H2O = L-tyrosylglycylglycine + L-phenylalanyl-L-leucine. The catalysed reaction is Met-enkephalin-Arg-Phe + H2O = L-arginyl-L-phenylalanine + Met-enkephalin. The dipeptidyl carboxypeptidase activity is strongly activated by chloride. Specifically inhibited by lisinopril. Inhibited by mixanpril, an orally-active drug used for the treatment of hypertension. With respect to regulation, strongly inhibited by lisinopril and captopril. Its function is as follows. Dipeptidyl carboxypeptidase that removes dipeptides from the C-terminus of a variety of circulating hormones, such as angiotensin I, bradykinin or enkephalins, thereby playing a key role in the regulation of blood pressure, electrolyte homeostasis or synaptic plasticity. Composed of two similar catalytic domains, each possessing a functional active site, with different selectivity for substrates. Plays a major role in the angiotensin-renin system that regulates blood pressure and sodium retention by the kidney by converting angiotensin I to angiotensin II, resulting in an increase of the vasoconstrictor activity of angiotensin. Also able to inactivate bradykinin, a potent vasodilator, and therefore enhance the blood pressure response. Acts as a regulator of synaptic transmission by mediating cleavage of neuropeptide hormones, such as substance P, neurotensin or enkephalins. Catalyzes degradation of different enkephalin neuropeptides (Met-enkephalin, Leu-enkephalin, Met-enkephalin-Arg-Phe and possibly Met-enkephalin-Arg-Gly-Leu). Acts as a regulator of synaptic plasticity in the nucleus accumbens of the brain by mediating cleavage of Met-enkephalin-Arg-Phe, a strong ligand of Mu-type opioid receptor OPRM1, into Met-enkephalin. Met-enkephalin-Arg-Phe cleavage by ACE decreases activation of OPRM1, leading to long-term synaptic potentiation of glutamate release. Also acts as a regulator of hematopoietic stem cell differentiation by mediating degradation of hemoregulatory peptide N-acetyl-SDKP (AcSDKP). Acts as a regulator of cannabinoid signaling pathway by mediating degradation of hemopressin, an antagonist peptide of the cannabinoid receptor CNR1. Involved in amyloid-beta metabolism by catalyzing degradation of Amyloid-beta protein 40 and Amyloid-beta protein 42 peptides, thereby preventing plaque formation. Catalyzes cleavage of cholecystokinin (maturation of Cholecystokinin-8 and Cholecystokinin-5) and Gonadoliberin-1 (both maturation and degradation) hormones. Degradation of hemoregulatory peptide N-acetyl-SDKP (AcSDKP) and amyloid-beta proteins is mediated by the N-terminal catalytic domain, while angiotensin I and cholecystokinin cleavage is mediated by the C-terminal catalytic region. Soluble form that is released in blood plasma and other body fluids following proteolytic cleavage in the juxtamembrane stalk region. Functionally, isoform produced by alternative promoter usage that is specifically expressed in spermatocytes and adult testis, and which is required for male fertility. In contrast to somatic isoforms, only contains one catalytic domain. Acts as a dipeptidyl carboxypeptidase that removes dipeptides from the C-terminus of substrates. The identity of substrates that are needed for male fertility is unknown. May also have a glycosidase activity which releases GPI-anchored proteins from the membrane by cleaving the mannose linkage in the GPI moiety. The GPIase activity was reported to be essential for the egg-binding ability of the sperm. This activity is however unclear and has been challenged by other groups, suggesting that it may be indirect. The chain is Angiotensin-converting enzyme from Oryctolagus cuniculus (Rabbit).